Consider the following 610-residue polypeptide: E-selectin (610 aa).

Residues 1–21 (MIASQFLSALTLVLLIKESGA) form the signal peptide. The C-type lectin domain maps to 22-139 (WSYNTSTEAM…CSKKKLALCY (118 aa)). Topologically, residues 22–556 (WSYNTSTEAM…CEAPTESNIP (535 aa)) are extracellular. An N-linked (GlcNAc...) asparagine glycan is attached at Asn25. Disulfide bonds link Cys40-Cys138, Cys111-Cys130, Cys143-Cys154, Cys148-Cys163, and Cys165-Cys174. 3 residues coordinate Ca(2+): Glu101, Asn103, and Glu109. A carbohydrate contacts are provided by residues 101–109 (EPNNRQKDE), 113–118 (EIYIKR), and 126–128 (NDE). Positions 126 and 127 each coordinate Ca(2+). The EGF-like domain maps to 140-175 (TAACTNTSCSGHGECVETINNYTCKCDPGFSGLKCE). 2 N-linked (GlcNAc...) asparagine glycosylation sites follow: Asn145 and Asn160. Sushi domains are found at residues 178–239 (VNCT…ACNV), 240–301 (VECD…TCKA), 303–364 (TCRA…VCEA), 366–427 (QCTA…TCEA), 429–490 (RCDA…SCQV), and 491–549 (VKCS…TCEA). 3 N-linked (GlcNAc...) asparagine glycosylation sites follow: Asn179, Asn199, and Asn203. Disulfide bonds link Cys180-Cys224, Cys193-Cys206, Cys210-Cys237, Cys242-Cys286, Cys255-Cys268, Cys272-Cys299, Cys304-Cys349, Cys335-Cys362, Cys367-Cys412, Cys398-Cys425, Cys430-Cys475, Cys461-Cys488, Cys493-Cys534, and Cys520-Cys547. Asn265 carries N-linked (GlcNAc...) asparagine glycosylation. Asn312 and Asn332 each carry an N-linked (GlcNAc...) asparagine glycan. 2 N-linked (GlcNAc...) asparagine glycosylation sites follow: Asn503 and Asn527. A helical membrane pass occupies residues 557 to 578 (LVAGLSAAGLSLLTLAPFLLWL). The Cytoplasmic segment spans residues 579–610 (RKCLRKAKKFVPASSCQSLESDGSYQKPSYIL).

Belongs to the selectin/LECAM family. As to quaternary structure, interacts with SELPLG/PSGL1 and PODXL2 through the sialyl Lewis X epitope. SELPLG sulfation appears not to be required for this interaction.

Its subcellular location is the cell membrane. Its function is as follows. Cell-surface glycoprotein having a role in immunoadhesion. Mediates in the adhesion of blood neutrophils in cytokine-activated endothelium through interaction with SELPLG/PSGL1. May have a role in capillary morphogenesis. The sequence is that of E-selectin (SELE) from Homo sapiens (Human).